The following is a 230-amino-acid chain: L-aspartate/glutamate-specific racemase (230 aa).

Substrate contacts are provided by residues Met-10, Gln-52, and 83–85; that span reads TNT. The active-site Proton donor is Thr-83. The Proton acceptor role is filled by Cys-197. 198–199 lines the substrate pocket; that stretch reads TE.

The protein belongs to the aspartate/glutamate racemases family. Homodimer.

It carries out the reaction L-glutamate = D-glutamate. The enzyme catalyses L-aspartate = D-aspartate. In terms of biological role, exhibits racemase activity for both L-glutamate and L-aspartate. This Escherichia coli O157:H7 protein is L-aspartate/glutamate-specific racemase.